Here is a 419-residue protein sequence, read N- to C-terminus: rRNA methyltransferase 3, mitochondrial (419 aa).

The N-terminal 39 residues, 1 to 39 (MAALCGGMLRGCILKPLGLSGSLQLKRNVRALRRTPVRV), are a transit peptide targeting the mitochondrion. A disordered region spans residues 42–68 (ADEEGRERKQVEASRQRQPRQNESQAC). The span at 44-56 (EEGRERKQVEASR) shows a compositional bias: basic and acidic residues. The S-adenosyl-L-methionine site is built by glycine 357, isoleucine 381, and leucine 390.

This sequence belongs to the class IV-like SAM-binding methyltransferase superfamily. RNA methyltransferase TrmH family.

The protein resides in the mitochondrion. It catalyses the reaction a uridine in rRNA + S-adenosyl-L-methionine = a 2'-O-methyluridine in rRNA + S-adenosyl-L-homocysteine + H(+). S-adenosyl-L-methionine-dependent 2'-O-ribose methyltransferase that catalyzes the formation of 2'-O-methylguanosine at position 1370 (Gm1370) in the mitochondrial large subunit ribosomal RNA (mtLSU rRNA), a conserved modification in the peptidyl transferase domain of the mtLSU rRNA. Also required for formation of 2'-O-methyluridine at position 1369 (Um1369) mediated by MRM2. This Xenopus laevis (African clawed frog) protein is rRNA methyltransferase 3, mitochondrial.